A 287-amino-acid chain; its full sequence is ATP synthase gamma chain (287 aa).

This sequence belongs to the ATPase gamma chain family. F-type ATPases have 2 components, CF(1) - the catalytic core - and CF(0) - the membrane proton channel. CF(1) has five subunits: alpha(3), beta(3), gamma(1), delta(1), epsilon(1). CF(0) has three main subunits: a, b and c.

It localises to the cell inner membrane. In terms of biological role, produces ATP from ADP in the presence of a proton gradient across the membrane. The gamma chain is believed to be important in regulating ATPase activity and the flow of protons through the CF(0) complex. The chain is ATP synthase gamma chain from Marinobacter nauticus (strain ATCC 700491 / DSM 11845 / VT8) (Marinobacter aquaeolei).